The following is a 173-amino-acid chain: Crossover junction endodeoxyribonuclease RuvC (173 aa).

Catalysis depends on residues aspartate 8, glutamate 67, and aspartate 139. Mg(2+) is bound by residues aspartate 8, glutamate 67, and aspartate 139.

It belongs to the RuvC family. Homodimer which binds Holliday junction (HJ) DNA. The HJ becomes 2-fold symmetrical on binding to RuvC with unstacked arms; it has a different conformation from HJ DNA in complex with RuvA. In the full resolvosome a probable DNA-RuvA(4)-RuvB(12)-RuvC(2) complex forms which resolves the HJ. It depends on Mg(2+) as a cofactor.

It localises to the cytoplasm. The catalysed reaction is Endonucleolytic cleavage at a junction such as a reciprocal single-stranded crossover between two homologous DNA duplexes (Holliday junction).. In terms of biological role, the RuvA-RuvB-RuvC complex processes Holliday junction (HJ) DNA during genetic recombination and DNA repair. Endonuclease that resolves HJ intermediates. Cleaves cruciform DNA by making single-stranded nicks across the HJ at symmetrical positions within the homologous arms, yielding a 5'-phosphate and a 3'-hydroxyl group; requires a central core of homology in the junction. The consensus cleavage sequence is 5'-(A/T)TT(C/G)-3'. Cleavage occurs on the 3'-side of the TT dinucleotide at the point of strand exchange. HJ branch migration catalyzed by RuvA-RuvB allows RuvC to scan DNA until it finds its consensus sequence, where it cleaves and resolves the cruciform DNA. In Shewanella piezotolerans (strain WP3 / JCM 13877), this protein is Crossover junction endodeoxyribonuclease RuvC.